A 289-amino-acid chain; its full sequence is Splicing factor C9orf78 homolog (289 aa).

Disordered regions lie at residues 1-30 and 85-111; these read MRIT…VRLK and RGKD…RRDE. Positions 5-58 are interaction with SNRNP200; sequence GKTFRRRRADSESEEDEQESEEVRLKLEETREVQNLRKRPNGVSAAALLVGEKV. Phosphoserine occurs at positions 15 and 17. Tyrosine 147 bears the Phosphotyrosine mark. Residues 232-283 are compositionally biased toward basic and acidic residues; that stretch reads LNAPIRRNKEEPKARPLRVGDTEKPEPERSPPNRKRPANEKATDDYHYEKFK. Positions 232–289 are disordered; the sequence is LNAPIRRNKEEPKARPLRVGDTEKPEPERSPPNRKRPANEKATDDYHYEKFKKMNRRY. The residue at position 253 (threonine 253) is a Phosphothreonine. Serine 261 is modified (phosphoserine).

Belongs to the TLS1 family. As to quaternary structure, component of the spliceosome. Interacts with SNRNP200; the interaction is direct. Interacts with PRPF8.

The protein localises to the nucleus. It is found in the chromosome. The protein resides in the centromere. In terms of biological role, plays a role in pre-mRNA splicing by promoting usage of the upstream 3'-splice site at alternative NAGNAG splice sites; these are sites featuring alternative acceptor motifs separated by only a few nucleotides. May also modulate exon inclusion events. PPlays a role in spliceosomal remodeling by displacing WBP4 from SNRNP200 and may act to inhibit SNRNP200 helicase activity. Binds U5 snRNA. Required for proper chromosome segregation. Not required for splicing of shelterin components. In Mus musculus (Mouse), this protein is Splicing factor C9orf78 homolog.